Here is a 254-residue protein sequence, read N- to C-terminus: NAD kinase (254 aa).

Asp44 acts as the Proton acceptor in catalysis. Residues Asp44–Gly45, Asn114–Glu115, Asp144, Ala152, Thr155–Ser160, and Ala179 contribute to the NAD(+) site.

The protein belongs to the NAD kinase family. It depends on a divalent metal cation as a cofactor.

Its subcellular location is the cytoplasm. The enzyme catalyses NAD(+) + ATP = ADP + NADP(+) + H(+). Its function is as follows. Involved in the regulation of the intracellular balance of NAD and NADP, and is a key enzyme in the biosynthesis of NADP. Catalyzes specifically the phosphorylation on 2'-hydroxyl of the adenosine moiety of NAD to yield NADP. The protein is NAD kinase of Cereibacter sphaeroides (strain ATCC 17025 / ATH 2.4.3) (Rhodobacter sphaeroides).